We begin with the raw amino-acid sequence, 365 residues long: Chorismate synthase (365 aa).

Arginine 48 and arginine 54 together coordinate NADP(+). FMN contacts are provided by residues 131 to 133 (RSS), 243 to 244 (NA), glycine 288, 303 to 307 (KPTSS), and arginine 329.

This sequence belongs to the chorismate synthase family. In terms of assembly, homotetramer. Requires FMNH2 as cofactor.

It catalyses the reaction 5-O-(1-carboxyvinyl)-3-phosphoshikimate = chorismate + phosphate. Its pathway is metabolic intermediate biosynthesis; chorismate biosynthesis; chorismate from D-erythrose 4-phosphate and phosphoenolpyruvate: step 7/7. Catalyzes the anti-1,4-elimination of the C-3 phosphate and the C-6 proR hydrogen from 5-enolpyruvylshikimate-3-phosphate (EPSP) to yield chorismate, which is the branch point compound that serves as the starting substrate for the three terminal pathways of aromatic amino acid biosynthesis. This reaction introduces a second double bond into the aromatic ring system. The sequence is that of Chorismate synthase from Sinorhizobium medicae (strain WSM419) (Ensifer medicae).